We begin with the raw amino-acid sequence, 207 residues long: Large ribosomal subunit protein uL3c (207 aa).

The disordered stretch occupies residues 129–148 (TRGPMTHGSKNHRAPGSIGM).

This sequence belongs to the universal ribosomal protein uL3 family. In terms of assembly, part of the 50S ribosomal subunit.

The protein resides in the plastid. The protein localises to the chloroplast. Its function is as follows. One of the primary rRNA binding proteins, it binds directly near the 3'-end of the 23S rRNA, where it nucleates assembly of the 50S subunit. This is Large ribosomal subunit protein uL3c (rpl3) from Phaeodactylum tricornutum (strain CCAP 1055/1).